Here is a 100-residue protein sequence, read N- to C-terminus: Co-chaperonin GroES (100 aa).

Belongs to the GroES chaperonin family. In terms of assembly, heptamer of 7 subunits arranged in a ring. Interacts with the chaperonin GroEL.

Its subcellular location is the cytoplasm. Functionally, together with the chaperonin GroEL, plays an essential role in assisting protein folding. The GroEL-GroES system forms a nano-cage that allows encapsulation of the non-native substrate proteins and provides a physical environment optimized to promote and accelerate protein folding. GroES binds to the apical surface of the GroEL ring, thereby capping the opening of the GroEL channel. The protein is Co-chaperonin GroES of Mycolicibacterium paratuberculosis (strain ATCC BAA-968 / K-10) (Mycobacterium paratuberculosis).